Here is a 695-residue protein sequence, read N- to C-terminus: DNA topoisomerase 4 subunit B (695 aa).

The disordered stretch occupies residues 1–53; sequence MSSSDKIPSLFGDDDALAPVPAAPFKASVEPRVEPTPRPIPPPPPSKTASAPG. Pro residues predominate over residues 36-46; sequence TPRPIPPPPPS. ATP contacts are provided by residues Tyr55, Asn95, Asp122, 164–170, and Lys397; that span reads GLHGVGA. The Toprim domain occupies 477–591; that stretch reads AELFIVEGDS…GGHLFLALPP (115 aa). Mg(2+)-binding residues include Glu483, Asp556, and Asp558.

The protein belongs to the type II topoisomerase family. ParE type 1 subfamily. Heterotetramer composed of ParC and ParE. Requires Mg(2+) as cofactor. Mn(2+) serves as cofactor. The cofactor is Ca(2+).

The catalysed reaction is ATP-dependent breakage, passage and rejoining of double-stranded DNA.. Functionally, topoisomerase IV is essential for chromosome segregation. It relaxes supercoiled DNA. Performs the decatenation events required during the replication of a circular DNA molecule. This chain is DNA topoisomerase 4 subunit B, found in Caulobacter vibrioides (strain ATCC 19089 / CIP 103742 / CB 15) (Caulobacter crescentus).